Consider the following 1120-residue polypeptide: Transcriptional repressor NF-X1 (1120 aa).

The interaction with PABPC1 and PABC4 stretch occupies residues 9–26; that stretch reads GTFKFNTDAAEFIPQEKK. Positions 22–295 are disordered; sequence PQEKKNSGLN…LNERPAKSTC (274 aa). Ser50, Ser82, and Ser95 each carry phosphoserine. A compositionally biased stretch (polar residues) spans 73-106; the sequence is YHPSGSKPKSQQTSFQSSPCNKSPKSHGLQNQPW. Residues 111 to 120 show a composition bias toward basic residues; that stretch reads NEKHHIRVKK. Positions 124-141 are enriched in polar residues; sequence LAEQTSDTAGLESSTRSE. Ser129 and Ser150 each carry phosphoserine. Composition is skewed to basic and acidic residues over residues 142–159, 188–202, 222–254, and 282–291; these read SGTD…KEVV, LKCE…KPED, SSRK…EGAR, and PKDDLNERPA. Phosphoserine is present on Ser326. An RING-type; atypical zinc finger spans residues 358–409; it reads CMVCCELVRVTAPVWSCQSCYHVFHLNCIKKWARSPASQADGQSGWRCPACQ. 8 NF-X1-type zinc fingers span residues 453 to 471, 506 to 525, 567 to 586, 632 to 655, 694 to 713, 721 to 740, 832 to 854, and 863 to 884; these read CPHS…PCPA, CGQH…PCQI, CGNH…QCPR, CGSL…PCSR, CGRH…KCPL, CGLH…TCWQ, CGMH…PCKQ, and CGHP…ACKA. The R3H domain maps to 994-1062; that stretch reads LKFVSDVEKE…KRNVVVTAIR (69 aa). The interval 1081–1109 is disordered; that stretch reads QARPPPPIPHHRHQSDKNPGSSNLQKITK. Residues 1097–1106 show a composition bias toward polar residues; it reads KNPGSSNLQK.

This sequence belongs to the NFX1 family. As to quaternary structure, isoform 1 interacts with PABPC1 and PABPC4. (Microbial infection) Isoform 1 and isoform 3 interact with human papillomavirus (HPV) type-16 E6 oncoprotein. In terms of processing, isoform 3 is polyubiquitinated in the presence of HPV16 E6 protein; which leads to proteasomal degradation. Isoform 1 is not polyubiquitinated.

The protein localises to the nucleus. In terms of biological role, binds to the X-box motif of MHC class II genes and represses their expression. May play an important role in regulating the duration of an inflammatory response by limiting the period in which MHC class II molecules are induced by interferon-gamma. Isoform 3 binds to the X-box motif of TERT promoter and represses its expression. Together with PABPC1 or PABPC4, isoform 1 acts as a coactivator for TERT expression. Mediates E2-dependent ubiquitination. This Homo sapiens (Human) protein is Transcriptional repressor NF-X1 (NFX1).